A 587-amino-acid polypeptide reads, in one-letter code: Mitogen-activated protein kinase 4 (587 aa).

Residues phenylalanine 20–methionine 312 enclose the Protein kinase domain. Residues leucine 26 to valine 34 and lysine 49 each bind ATP. The active-site Proton acceptor is the aspartate 149. Residue serine 186 is modified to Phosphoserine; by PAK1, PAK2 and PAK3. The short motif at serine 186–glycine 188 is the SEG motif element. Residues phenylalanine 328–glutamate 333 carry the FRIEDE motif motif. 2 stretches are compositionally biased toward basic and acidic residues: residues glutamine 373–arginine 383 and valine 395–histidine 413. Residues glutamine 373–histidine 413 form a disordered region. Serine 434 carries the phosphoserine modification. The disordered stretch occupies residues serine 499–serine 534.

The protein belongs to the protein kinase superfamily. CMGC Ser/Thr protein kinase family. MAP kinase subfamily. As to quaternary structure, homodimer. Heterodimer with ERK3/MAPK6. Interacts with (via FRIEDE motif) MAPKAPK5. Mg(2+) serves as cofactor. Phosphorylated at Ser-186 by PAK1, PAK2 and PAK3 resulting in catalytic activation. Phosphorylated by MAPKAPK5 at other sites. As to expression, high expression in heart and brain.

It localises to the cytoplasm. The protein resides in the nucleus. It catalyses the reaction L-seryl-[protein] + ATP = O-phospho-L-seryl-[protein] + ADP + H(+). It carries out the reaction L-threonyl-[protein] + ATP = O-phospho-L-threonyl-[protein] + ADP + H(+). With respect to regulation, activated by phosphorylation at Ser-186. Functionally, atypical MAPK protein. Phosphorylates microtubule-associated protein 2 (MAP2) and MAPKAPK5. The precise role of the complex formed with MAPKAPK5 is still unclear, but the complex follows a complex set of phosphorylation events: upon interaction with atypical MAPKAPK5, ERK4/MAPK4 is phosphorylated at Ser-186 and then mediates phosphorylation and activation of MAPKAPK5, which in turn phosphorylates ERK4/MAPK4. May promote entry in the cell cycle. The polypeptide is Mitogen-activated protein kinase 4 (MAPK4) (Homo sapiens (Human)).